Reading from the N-terminus, the 278-residue chain is Sulfur carrier protein FdhD (278 aa).

Cys-121 serves as the catalytic Cysteine persulfide intermediate. 260-265 (FCKPGR) serves as a coordination point for Mo-bis(molybdopterin guanine dinucleotide).

Belongs to the FdhD family.

The protein resides in the cytoplasm. Functionally, required for formate dehydrogenase (FDH) activity. Acts as a sulfur carrier protein that transfers sulfur from IscS to the molybdenum cofactor prior to its insertion into FDH. This is Sulfur carrier protein FdhD from Escherichia coli O127:H6 (strain E2348/69 / EPEC).